Here is a 396-residue protein sequence, read N- to C-terminus: MALRITPVTLQSERYRSFSFPKKANLRSPKFAMASTLGSSTPKVDNAKKPFQPPREVHVQVTHSMPPQKIEIFKSIEGWAEQNILVHLKPVEKCWQAQDFLPDPASEGFDEQVKELRARAKEIPDDYFVVLVGDMITEEALPTYQTMLNTLDGVRDETGASLTPWAVWTRAWTAEENRHGDLLHTYLYLSGRVDMRQIQKTIQYLIGSGMDPRTENSPYLGFIYTSFQERATFVSHGNTARHAKDHGDVKLAQICGTIASDEKRHETAYTKIVEKLFEIDPDGTVLAFADMMRKKISMPAHLMYDGRDDNLFEHFSAVAQRLGVYTAKDYADILEFLVGRWKVADLTGLSGEGRKAQDYVCGLPPRIRRLEERAQGRAKEGPVVPFSWIFDRQVKL.

A chloroplast-targeting transit peptide spans 1 to 33; that stretch reads MALRITPVTLQSERYRSFSFPKKANLRSPKFAM. Residue Ala34 is modified to Blocked amino end (Ala); partial. Fe cation is bound by residues Glu138, Glu176, His179, Glu229, Glu262, and His265.

It belongs to the fatty acid desaturase type 2 family. Homodimer. Requires Fe(2+) as cofactor. Most of the N-terminus is blocked.

It is found in the plastid. The protein resides in the chloroplast. The enzyme catalyses octadecanoyl-[ACP] + 2 reduced [2Fe-2S]-[ferredoxin] + O2 + 2 H(+) = (9Z)-octadecenoyl-[ACP] + 2 oxidized [2Fe-2S]-[ferredoxin] + 2 H2O. It participates in lipid metabolism; fatty acid metabolism. Its function is as follows. Converts stearoyl-ACP to oleoyl-ACP by introduction of a cis double bond between carbons 9 and 10 of the acyl chain. The chain is Stearoyl-[acyl-carrier-protein] 9-desaturase, chloroplastic from Carthamus tinctorius (Safflower).